A 428-amino-acid polypeptide reads, in one-letter code: Phosphomethylpyrimidine synthase 1 (428 aa).

Substrate contacts are provided by residues Asn-65, Met-94, Tyr-123, His-158, 180 to 182, 221 to 224, and Glu-260; these read SRG and DGMR. His-264 contacts Zn(2+). Tyr-287 is a substrate binding site. Position 328 (His-328) interacts with Zn(2+). Cys-405, Cys-408, and Cys-412 together coordinate [4Fe-4S] cluster.

This sequence belongs to the ThiC family. Requires [4Fe-4S] cluster as cofactor.

It carries out the reaction 5-amino-1-(5-phospho-beta-D-ribosyl)imidazole + S-adenosyl-L-methionine = 4-amino-2-methyl-5-(phosphooxymethyl)pyrimidine + CO + 5'-deoxyadenosine + formate + L-methionine + 3 H(+). It functions in the pathway cofactor biosynthesis; thiamine diphosphate biosynthesis. Its function is as follows. Catalyzes the synthesis of the hydroxymethylpyrimidine phosphate (HMP-P) moiety of thiamine from aminoimidazole ribotide (AIR) in a radical S-adenosyl-L-methionine (SAM)-dependent reaction. This Methanosarcina mazei (strain ATCC BAA-159 / DSM 3647 / Goe1 / Go1 / JCM 11833 / OCM 88) (Methanosarcina frisia) protein is Phosphomethylpyrimidine synthase 1.